The primary structure comprises 348 residues: GMP reductase 2 (348 aa).

NADP(+) is bound by residues 26–27, lysine 78, 129–131, and 180–181; these read SR, DVA, and IG. Positions 181, 183, and 186 each coordinate K(+). Cysteine 186 functions as the Thioimidate intermediate in the catalytic mechanism. Threonine 188 serves as the catalytic Proton donor/acceptor. Arginine 189 contacts K(+). GMP-binding positions include 219–221, 242–243, 268–270, and 286–290; these read DGG, GG, GMS, and RASEG. NADP(+) is bound by residues methionine 269 and 285–286; that span reads YR. The residue at position 291 (lysine 291) is an N6-acetyllysine. 314–317 lines the NADP(+) pocket; that stretch reads STCT.

Belongs to the IMPDH/GMPR family. GuaC type 1 subfamily. Homotetramer.

The catalysed reaction is IMP + NH4(+) + NADP(+) = GMP + NADPH + 2 H(+). Functionally, catalyzes the irreversible NADPH-dependent deamination of GMP to IMP. It functions in the conversion of nucleobase, nucleoside and nucleotide derivatives of G to A nucleotides, and in maintaining the intracellular balance of A and G nucleotides. Plays a role in modulating cellular differentiation. The chain is GMP reductase 2 from Mus musculus (Mouse).